We begin with the raw amino-acid sequence, 338 residues long: Phospho-2-dehydro-3-deoxyheptonate aldolase (338 aa).

This sequence belongs to the class-I DAHP synthase family. As to quaternary structure, homotetramer. A divalent metal cation is required as a cofactor.

It carries out the reaction D-erythrose 4-phosphate + phosphoenolpyruvate + H2O = 7-phospho-2-dehydro-3-deoxy-D-arabino-heptonate + phosphate. It functions in the pathway metabolic intermediate biosynthesis; chorismate biosynthesis; chorismate from D-erythrose 4-phosphate and phosphoenolpyruvate: step 1/7. Its activity is regulated as follows. Inhibited by L-phenylalanine and L-tyrosine. Its function is as follows. Catalyzes the condensation of phosphoenolpyruvate (PEP) and D-erythrose-4-phosphate (E4P) giving rise to 3-deoxy-D-arabino-heptulosonate-7-phosphate (DAHP). This chain is Phospho-2-dehydro-3-deoxyheptonate aldolase (aroF), found in Thermotoga maritima (strain ATCC 43589 / DSM 3109 / JCM 10099 / NBRC 100826 / MSB8).